The sequence spans 267 residues: Malonyl-[acyl-carrier protein] O-methyltransferase (267 aa).

This sequence belongs to the methyltransferase superfamily.

It carries out the reaction malonyl-[ACP] + S-adenosyl-L-methionine = malonyl-[ACP] methyl ester + S-adenosyl-L-homocysteine. Its pathway is cofactor biosynthesis; biotin biosynthesis. Functionally, converts the free carboxyl group of a malonyl-thioester to its methyl ester by transfer of a methyl group from S-adenosyl-L-methionine (SAM). It allows to synthesize pimeloyl-ACP via the fatty acid synthetic pathway. In Geobacter sulfurreducens (strain ATCC 51573 / DSM 12127 / PCA), this protein is Malonyl-[acyl-carrier protein] O-methyltransferase.